A 430-amino-acid chain; its full sequence is Serine hydroxymethyltransferase 1 (430 aa).

Residues Leu-132 and 136–138 (GHL) each bind (6S)-5,6,7,8-tetrahydrofolate. N6-(pyridoxal phosphate)lysine is present on Lys-241.

This sequence belongs to the SHMT family. In terms of assembly, homodimer. It depends on pyridoxal 5'-phosphate as a cofactor.

It is found in the cytoplasm. It catalyses the reaction (6R)-5,10-methylene-5,6,7,8-tetrahydrofolate + glycine + H2O = (6S)-5,6,7,8-tetrahydrofolate + L-serine. The protein operates within one-carbon metabolism; tetrahydrofolate interconversion. Its pathway is amino-acid biosynthesis; glycine biosynthesis; glycine from L-serine: step 1/1. In terms of biological role, catalyzes the reversible interconversion of serine and glycine with tetrahydrofolate (THF) serving as the one-carbon carrier. This reaction serves as the major source of one-carbon groups required for the biosynthesis of purines, thymidylate, methionine, and other important biomolecules. Also exhibits THF-independent aldolase activity toward beta-hydroxyamino acids, producing glycine and aldehydes, via a retro-aldol mechanism. This Bordetella parapertussis (strain 12822 / ATCC BAA-587 / NCTC 13253) protein is Serine hydroxymethyltransferase 1.